Reading from the N-terminus, the 185-residue chain is Photosystem I assembly protein Ycf4 (185 aa).

The next 2 membrane-spanning stretches (helical) occupy residues 24–44 and 66–86; these read YLIGGMLTIGGIGFILASISS and IIMGAYGVIANLLNIYLWYLV.

Belongs to the Ycf4 family.

It localises to the cellular thylakoid membrane. Seems to be required for the assembly of the photosystem I complex. In Prochlorococcus marinus (strain MIT 9515), this protein is Photosystem I assembly protein Ycf4.